We begin with the raw amino-acid sequence, 398 residues long: Glucose-1-phosphate adenylyltransferase (398 aa).

Alpha-D-glucose 1-phosphate-binding positions include Tyr100, Gly165, 180–181 (EK), and Ser191.

Belongs to the bacterial/plant glucose-1-phosphate adenylyltransferase family. Homotetramer.

The catalysed reaction is alpha-D-glucose 1-phosphate + ATP + H(+) = ADP-alpha-D-glucose + diphosphate. It participates in glycan biosynthesis; glycogen biosynthesis. In terms of biological role, involved in the biosynthesis of ADP-glucose, a building block required for the elongation reactions to produce glycogen. Catalyzes the reaction between ATP and alpha-D-glucose 1-phosphate (G1P) to produce pyrophosphate and ADP-Glc. The protein is Glucose-1-phosphate adenylyltransferase of Desulfitobacterium hafniense (strain DSM 10664 / DCB-2).